The following is a 634-amino-acid chain: Sodium-dependent neutral amino acid transporter B(0)AT1 (634 aa).

The Cytoplasmic portion of the chain corresponds to 1-41; it reads MVRLVLPNPGLDTRILSLAELETIEQEEASSRPKWDNKAQY. At serine 17 the chain carries Phosphoserine. The chain crosses the membrane as a helical span at residues 42 to 62; it reads LLTCVGFCVGLGNVWRFPYLC. Residues 63–65 are Extracellular-facing; the sequence is QSH. A helical membrane pass occupies residues 66–86; that stretch reads GGGAFMIPFLILLVLEGIPLL. The Cytoplasmic portion of the chain corresponds to 87 to 120; it reads HLEFAIGQRLRRGSLGVWSSIHPALKGVGLTSML. A helical membrane pass occupies residues 121–141; it reads VSFVVGLYYNTIISWIMWYLF. At 142-192 the chain is on the extracellular side; it reads NSFQEPLPWSECPLNENQTGYVDECARSSPVDYFWYRETLNISTSISDSGS. Residues asparagine 158 and asparagine 182 are each glycosylated (N-linked (GlcNAc...) asparagine). A helical transmembrane segment spans residues 193–213; sequence IQWRMLLCLACAWSVLYMCTI. Residues 214 to 221 lie on the Cytoplasmic side of the membrane; that stretch reads RGIETTGK. A helical membrane pass occupies residues 222–242; it reads VVYITSTLPYVVLTIFLIRGL. At 243-268 the chain is on the extracellular side; that stretch reads TLKGATKGIIYLFTPNVTELANPVTW. The N-linked (GlcNAc...) asparagine glycan is linked to asparagine 258. Residues 269-289 form a helical membrane-spanning segment; the sequence is LDAGAQVFFSFSLAFGGLISF. Topologically, residues 290–304 are cytoplasmic; sequence SSYNSVHNNCERDSV. A helical transmembrane segment spans residues 305 to 325; sequence IVSIINGFTSVYVAIVIYSII. The Extracellular segment spans residues 326–413; the sequence is GFRATQRYDD…TEAITKMPVS (88 aa). Residues asparagine 354 and asparagine 368 are each glycosylated (N-linked (GlcNAc...) asparagine). A helical membrane pass occupies residues 414–434; the sequence is PLWSVLFFIMLFCLGLSSMFG. The Cytoplasmic portion of the chain corresponds to 435–456; the sequence is NMEGVVVPLQDLKVIPPKWPKE. Residues 457 to 477 form a helical membrane-spanning segment; sequence LLTGLICLGTFLIGFIFTLNS. Residues 478–487 lie on the Extracellular side of the membrane; sequence GQYWLSLLDS. The helical transmembrane segment at 488–508 threads the bilayer; that stretch reads YAVSIPLLIIAFCEMFSVVYV. Residues 509–531 lie on the Cytoplasmic side of the membrane; it reads YGVDRFNKDIEFMIGHKPNIFWQ. A helical transmembrane segment spans residues 532 to 552; the sequence is VTWRVVSPLLMLIILVFFFVV. Over 553-581 the chain is Extracellular; that stretch reads QVSQELTYSIWNPGYEEFPKSQKISHPNW. The helical transmembrane segment at 582 to 602 threads the bilayer; sequence VYAVVVIVAGVPSLTIPSYAI. The Cytoplasmic portion of the chain corresponds to 603-634; the sequence is YKLIRNCCQKPGDRQGLVSTLSTASMNGDLKY. Serine 627 carries the phosphoserine modification.

This sequence belongs to the sodium:neurotransmitter symporter (SNF) (TC 2.A.22) family. SLC6A19 subfamily. Interacts in a tissue-specific manner with ACE2 in small intestine and with CLTRN in the kidney. Interacts with CLTRN; this interaction is required for trafficking of SLC6A19 to the plasma membrane and for its catalytic activation in kidneys. Interacts with ACE2; this interaction is required for trafficking of SLC6A19 to the plasma membrane and for its catalytic activation in intestine. Interacts with ANPEP; the interaction positively regulates its amino acid transporter activity.

The protein resides in the membrane. The enzyme catalyses L-alanine(in) + Na(+)(in) = L-alanine(out) + Na(+)(out). The catalysed reaction is L-cysteine(in) + Na(+)(in) = L-cysteine(out) + Na(+)(out). It carries out the reaction L-glutamine(in) + Na(+)(in) = L-glutamine(out) + Na(+)(out). It catalyses the reaction glycine(in) + Na(+)(in) = glycine(out) + Na(+)(out). The enzyme catalyses L-isoleucine(in) + Na(+)(in) = L-isoleucine(out) + Na(+)(out). The catalysed reaction is L-leucine(in) + Na(+)(in) = L-leucine(out) + Na(+)(out). It carries out the reaction L-methionine(in) + Na(+)(in) = L-methionine(out) + Na(+)(out). It catalyses the reaction L-phenylalanine(in) + Na(+)(in) = L-phenylalanine(out) + Na(+)(out). The enzyme catalyses L-serine(in) + Na(+)(in) = L-serine(out) + Na(+)(out). The catalysed reaction is L-tryptophan(in) + Na(+)(in) = L-tryptophan(out) + Na(+)(out). It carries out the reaction L-tyrosine(in) + Na(+)(in) = L-tyrosine(out) + Na(+)(out). It catalyses the reaction L-valine(in) + Na(+)(in) = L-valine(out) + Na(+)(out). Functionally, transporter that mediates resorption of neutral amino acids across the apical membrane of renal and intestinal epithelial cells. This uptake is sodium-dependent and chloride-independent. Requires CLTRN in kidney or ACE2 in intestine for cell surface expression and amino acid transporter activity. This is Sodium-dependent neutral amino acid transporter B(0)AT1 (SLC6A19) from Pongo abelii (Sumatran orangutan).